The sequence spans 73 residues: Translation initiation factor IF-1 (73 aa).

One can recognise an S1-like domain in the interval 1-72 (MAKEDVIEVE…TKGRITYRFI (72 aa)).

Belongs to the IF-1 family. Component of the 30S ribosomal translation pre-initiation complex which assembles on the 30S ribosome in the order IF-2 and IF-3, IF-1 and N-formylmethionyl-tRNA(fMet); mRNA recruitment can occur at any time during PIC assembly.

It is found in the cytoplasm. One of the essential components for the initiation of protein synthesis. Stabilizes the binding of IF-2 and IF-3 on the 30S subunit to which N-formylmethionyl-tRNA(fMet) subsequently binds. Helps modulate mRNA selection, yielding the 30S pre-initiation complex (PIC). Upon addition of the 50S ribosomal subunit IF-1, IF-2 and IF-3 are released leaving the mature 70S translation initiation complex. This Lactobacillus johnsonii (strain CNCM I-12250 / La1 / NCC 533) protein is Translation initiation factor IF-1.